The sequence spans 180 residues: Cytochrome b6-f complex iron-sulfur subunit (180 aa).

A helical membrane pass occupies residues 21–43 (LLTFGTITGTALGALYPVVKYFI). The Rieske domain occupies 66–162 (VSEYLAKHLP…ATVTEDDKLV (97 aa)). Positions 108, 110, 126, and 129 each coordinate [2Fe-2S] cluster. A disulfide bond links cysteine 113 and cysteine 128.

It belongs to the Rieske iron-sulfur protein family. In terms of assembly, the 4 large subunits of the cytochrome b6-f complex are cytochrome b6, subunit IV (17 kDa polypeptide, PetD), cytochrome f and the Rieske protein, while the 4 small subunits are PetG, PetL, PetM and PetN. The complex functions as a dimer. [2Fe-2S] cluster is required as a cofactor.

It is found in the cellular thylakoid membrane. The catalysed reaction is 2 oxidized [plastocyanin] + a plastoquinol + 2 H(+)(in) = 2 reduced [plastocyanin] + a plastoquinone + 4 H(+)(out). In terms of biological role, component of the cytochrome b6-f complex, which mediates electron transfer between photosystem II (PSII) and photosystem I (PSI), cyclic electron flow around PSI, and state transitions. This chain is Cytochrome b6-f complex iron-sulfur subunit, found in Thermosynechococcus vestitus (strain NIES-2133 / IAM M-273 / BP-1).